The sequence spans 365 residues: uncharacterized protein (365 aa).

Composition is skewed to basic and acidic residues over residues 1-27 (MDNV…EDHS) and 315-339 (AKDD…ETPK). 2 disordered regions span residues 1-31 (MDNV…NSYQ) and 308-365 (KEEK…CLIS). Positions 340–353 (KASNTPRRNKSNTQ) are enriched in polar residues.

The protein to yeast YGL082w. In terms of assembly, interacts with sad1.

It localises to the cytoplasm. This is an uncharacterized protein from Schizosaccharomyces pombe (strain 972 / ATCC 24843) (Fission yeast).